The chain runs to 270 residues: Glucosamine-6-phosphate deaminase (270 aa).

Aspartate 72 serves as the catalytic Proton acceptor; for enolization step. Aspartate 141 (for ring-opening step) is an active-site residue. Histidine 143 (proton acceptor; for ring-opening step) is an active-site residue. Glutamate 148 serves as the catalytic For ring-opening step.

Belongs to the glucosamine/galactosamine-6-phosphate isomerase family. NagB subfamily.

It catalyses the reaction alpha-D-glucosamine 6-phosphate + H2O = beta-D-fructose 6-phosphate + NH4(+). It functions in the pathway amino-sugar metabolism; N-acetylneuraminate degradation; D-fructose 6-phosphate from N-acetylneuraminate: step 5/5. With respect to regulation, allosterically activated by N-acetylglucosamine 6-phosphate (GlcNAc6P). Catalyzes the reversible isomerization-deamination of glucosamine 6-phosphate (GlcN6P) to form fructose 6-phosphate (Fru6P) and ammonium ion. The polypeptide is Glucosamine-6-phosphate deaminase (Treponema denticola (strain ATCC 35405 / DSM 14222 / CIP 103919 / JCM 8153 / KCTC 15104)).